An 86-amino-acid chain; its full sequence is uncharacterized protein (86 aa).

This is an uncharacterized protein from Dictyostelium discoideum (Social amoeba).